The sequence spans 396 residues: Serine/threonine-protein kinase 32A (396 aa).

The N-myristoyl glycine moiety is linked to residue glycine 2. A Protein kinase domain is found at 23–281 (FEILRAIGKG…LSDVQNFPYM (259 aa)). Residues 29–37 (IGKGSFGKV) and lysine 52 each bind ATP. Catalysis depends on aspartate 146, which acts as the Proton acceptor. The disordered stretch occupies residues 373–396 (KRQPNLALEQTKDPQGEDGQNNNL).

Belongs to the protein kinase superfamily. Ser/Thr protein kinase family. It depends on Mg(2+) as a cofactor.

Its subcellular location is the cell membrane. It carries out the reaction L-seryl-[protein] + ATP = O-phospho-L-seryl-[protein] + ADP + H(+). The enzyme catalyses L-threonyl-[protein] + ATP = O-phospho-L-threonyl-[protein] + ADP + H(+). This is Serine/threonine-protein kinase 32A (STK32A) from Homo sapiens (Human).